Here is a 288-residue protein sequence, read N- to C-terminus: HTH-type transcriptional regulator CzcR (288 aa).

An HTH lysR-type domain is found at 1 to 58 (MELRDLQIFQSVADQGSVSSAAKELNYVQSNVTARIKQLENELKTPLFYRHKRGMTLT). A DNA-binding region (H-T-H motif) is located at residues 18 to 37 (VSSAAKELNYVQSNVTARIK).

It belongs to the LysR transcriptional regulatory family.

The chain is HTH-type transcriptional regulator CzcR (czcR) from Bacillus anthracis.